Here is a 251-residue protein sequence, read N- to C-terminus: Triosephosphate isomerase (251 aa).

9-11 (NWK) contacts substrate. Catalysis depends on histidine 95, which acts as the Electrophile. The active-site Proton acceptor is glutamate 167. Substrate-binding positions include glycine 173, serine 213, and 234-235 (GG). Serine 213 bears the Phosphoserine mark.

This sequence belongs to the triosephosphate isomerase family. Homodimer.

It localises to the cytoplasm. The catalysed reaction is D-glyceraldehyde 3-phosphate = dihydroxyacetone phosphate. Its pathway is carbohydrate biosynthesis; gluconeogenesis. It participates in carbohydrate degradation; glycolysis; D-glyceraldehyde 3-phosphate from glycerone phosphate: step 1/1. Involved in the gluconeogenesis. Catalyzes stereospecifically the conversion of dihydroxyacetone phosphate (DHAP) to D-glyceraldehyde-3-phosphate (G3P). This is Triosephosphate isomerase from Bacillus mycoides (strain KBAB4) (Bacillus weihenstephanensis).